A 360-amino-acid polypeptide reads, in one-letter code: Mediator of RNA polymerase II transcription subunit 6 (360 aa).

Disordered regions lie at residues 186-238 (PAQP…NDPL) and 316-360 (AAAA…PGAA). Composition is skewed to low complexity over residues 190–205 (SAGA…YTAS) and 316–325 (AAAAAANANA).

This sequence belongs to the Mediator complex subunit 6 family. In terms of assembly, component of the Mediator complex.

It localises to the nucleus. Component of the Mediator complex, a coactivator involved in the regulated transcription of nearly all RNA polymerase II-dependent genes. Mediator functions as a bridge to convey information from gene-specific regulatory proteins to the basal RNA polymerase II transcription machinery. Mediator is recruited to promoters by direct interactions with regulatory proteins and serves as a scaffold for the assembly of a functional preinitiation complex with RNA polymerase II and the general transcription factors. The chain is Mediator of RNA polymerase II transcription subunit 6 (med-6) from Neurospora crassa (strain ATCC 24698 / 74-OR23-1A / CBS 708.71 / DSM 1257 / FGSC 987).